Reading from the N-terminus, the 144-residue chain is Large ribosomal subunit protein uL14 (144 aa).

It belongs to the universal ribosomal protein uL14 family. Part of the 50S ribosomal subunit. Forms a cluster with proteins L3 and L24e, part of which may contact the 16S rRNA in 2 intersubunit bridges.

Functionally, binds to 23S rRNA. Forms part of two intersubunit bridges in the 70S ribosome. This is Large ribosomal subunit protein uL14 from Pyrobaculum islandicum (strain DSM 4184 / JCM 9189 / GEO3).